The chain runs to 212 residues: Putative 3-methyladenine DNA glycosylase (212 aa).

This sequence belongs to the DNA glycosylase MPG family.

The sequence is that of Putative 3-methyladenine DNA glycosylase from Psychrobacter cryohalolentis (strain ATCC BAA-1226 / DSM 17306 / VKM B-2378 / K5).